We begin with the raw amino-acid sequence, 72 residues long: Large ribosomal subunit protein bL31 (72 aa).

It belongs to the bacterial ribosomal protein bL31 family. Type A subfamily. Part of the 50S ribosomal subunit.

Binds the 23S rRNA. The chain is Large ribosomal subunit protein bL31 from Rhodospirillum rubrum (strain ATCC 11170 / ATH 1.1.1 / DSM 467 / LMG 4362 / NCIMB 8255 / S1).